Here is a 3086-residue protein sequence, read N- to C-terminus: Genome polyprotein (3086 aa).

Positions 122 to 256 (RRSKILACDL…RAGIHTIKHY (135 aa)) constitute a Peptidase S30 domain. Residues His173, Asp182, and Ser215 each act as for P1 proteinase activity in the active site. The Peptidase C6 domain occupies 590–711 (YYVAPEGYCY…TGEMLDYNVG (122 aa)). Catalysis depends on for helper component proteinase activity residues Cys598 and His670. The Helicase ATP-binding domain maps to 1189–1341 (ISSDTANAEF…PMFPVRVSEA (153 aa)). 1202–1209 (GGVGTGKS) contacts ATP. The DEAH box motif lies at 1291 to 1294 (DECH). Tyr1870 carries the O-(5'-phospho-RNA)-tyrosine modification. The segment at 1970–1990 (HDGELRQSRPSRPIQKDQVPA) is disordered. Positions 2000–2217 (SKSIAKGLRD…VNYGTMDLTS (218 aa)) constitute a Peptidase C4 domain. Catalysis depends on for nuclear inclusion protein A activity residues His2045, Asp2080, and Cys2149. Positions 2482–2606 (WDYFDADGSR…AVEPSLSDKI (125 aa)) constitute a RdRp catalytic domain. Low complexity predominate over residues 2762 to 2821 (TAASSAATQTSTTSPTVTSTSGASTSTSSGTTSAPLASTTPPVSATTTPSTGTTAPTTPT). The disordered stretch occupies residues 2762–2822 (TAASSAATQT…GTTAPTTPTV (61 aa)). Thr3069 is modified (phosphothreonine).

The protein belongs to the potyviridae genome polyprotein family. Post-translationally, VPg is uridylylated by the polymerase and is covalently attached to the 5'-end of the genomic RNA. This uridylylated form acts as a nucleotide-peptide primer for the polymerase. Genome polyprotein of potyviruses undergoes post-translational proteolytic processing by the main proteinase NIa-pro resulting in the production of at least ten individual proteins. The P1 proteinase and the HC-pro cleave only their respective C-termini autocatalytically. 6K1 is essential for proper proteolytic separation of P3 from CI.

Its subcellular location is the host cytoplasmic vesicle membrane. It localises to the host cytoplasmic vesicle. It is found in the virion. The enzyme catalyses RNA(n) + a ribonucleoside 5'-triphosphate = RNA(n+1) + diphosphate. It carries out the reaction Hydrolyzes glutaminyl bonds, and activity is further restricted by preferences for the amino acids in P6 - P1' that vary with the species of potyvirus, e.g. Glu-Xaa-Xaa-Tyr-Xaa-Gln-|-(Ser or Gly) for the enzyme from tobacco etch virus. The natural substrate is the viral polyprotein, but other proteins and oligopeptides containing the appropriate consensus sequence are also cleaved.. It catalyses the reaction Hydrolyzes a Gly-|-Gly bond at its own C-terminus, commonly in the sequence -Tyr-Xaa-Val-Gly-|-Gly, in the processing of the potyviral polyprotein.. Its function is as follows. Required for aphid transmission and also has proteolytic activity. Only cleaves a Gly-Gly dipeptide at its own C-terminus. Interacts with virions and aphid stylets. Acts as a suppressor of RNA-mediated gene silencing, also known as post-transcriptional gene silencing (PTGS), a mechanism of plant viral defense that limits the accumulation of viral RNAs. May have RNA-binding activity. Functionally, has helicase activity. It may be involved in replication. Indispensable for virus replication. Reduces the abundance of host transcripts related to jasmonic acid biosynthesis therefore altering the host defenses. In order to increase its own stability, decreases host protein degradation pathways. In terms of biological role, indispensable for virus replication. Its function is as follows. Mediates the cap-independent, EIF4E-dependent translation of viral genomic RNAs. Binds to the cap-binding site of host EIF4E and thus interferes with the host EIF4E-dependent mRNA export and translation. VPg-RNA directly binds EIF4E and is a template for transcription. Also forms trimeric complexes with EIF4E-EIF4G, which are templates for translation. Functionally, has RNA-binding and proteolytic activities. An RNA-dependent RNA polymerase that plays an essential role in the virus replication. In terms of biological role, involved in aphid transmission, cell-to-cell and systemis movement, encapsidation of the viral RNA and in the regulation of viral RNA amplification. The sequence is that of Genome polyprotein from Dactylis glomerata (Orchard grass).